Consider the following 101-residue polypeptide: Citrinin resistance protein, mitochondrial (101 aa).

The protein resides in the mitochondrion. Mitochondrial protein that is involved in citrinin resistance. In Saccharomyces cerevisiae (strain ATCC 204508 / S288c) (Baker's yeast), this protein is Citrinin resistance protein, mitochondrial.